A 268-amino-acid chain; its full sequence is Probable 1-acyl-sn-glycerol-3-phosphate acyltransferase (268 aa).

Residues 92–97 (HKSNLD) carry the HXXXXD motif motif.

It belongs to the 1-acyl-sn-glycerol-3-phosphate acyltransferase family.

It carries out the reaction a 1-acyl-sn-glycero-3-phosphate + an acyl-CoA = a 1,2-diacyl-sn-glycero-3-phosphate + CoA. The protein operates within phospholipid metabolism; CDP-diacylglycerol biosynthesis; CDP-diacylglycerol from sn-glycerol 3-phosphate: step 2/3. In terms of biological role, converts lysophosphatidic acid (LPA) into phosphatidic acid by incorporating acyl moiety at the 2 position. The chain is Probable 1-acyl-sn-glycerol-3-phosphate acyltransferase (plsC) from Mycoplasma genitalium (strain ATCC 33530 / DSM 19775 / NCTC 10195 / G37) (Mycoplasmoides genitalium).